We begin with the raw amino-acid sequence, 78 residues long: Acyl carrier protein (78 aa).

Residues 1 to 77 (MALIDEIKDV…DAAKYIEEHK (77 aa)) enclose the Carrier domain. Ser-37 bears the O-(pantetheine 4'-phosphoryl)serine mark.

Belongs to the acyl carrier protein (ACP) family. 4'-phosphopantetheine is transferred from CoA to a specific serine of apo-ACP by AcpS. This modification is essential for activity because fatty acids are bound in thioester linkage to the sulfhydryl of the prosthetic group.

It localises to the secreted. It participates in lipid metabolism; fatty acid biosynthesis. Functionally, carrier of the growing fatty acid chain in fatty acid biosynthesis. Has hemolytic activity forming pores approximately 1 nm in diameter into erythrocytes. Is able to induce murine colonic lesions and to disrupt the integrity of epithelial cell monolayers. The polypeptide is Acyl carrier protein (acpP) (Brachyspira hyodysenteriae (Treponema hyodysenteriae)).